A 208-amino-acid chain; its full sequence is Uracil phosphoribosyltransferase (208 aa).

Residues Arg-77, Arg-102, and 128–136 (DPMLATGGT) contribute to the 5-phospho-alpha-D-ribose 1-diphosphate site. Residues Ile-191 and 196-198 (GDI) each bind uracil. 5-phospho-alpha-D-ribose 1-diphosphate is bound at residue Asp-197.

The protein belongs to the UPRTase family. Mg(2+) is required as a cofactor.

The catalysed reaction is UMP + diphosphate = 5-phospho-alpha-D-ribose 1-diphosphate + uracil. The protein operates within pyrimidine metabolism; UMP biosynthesis via salvage pathway; UMP from uracil: step 1/1. Allosterically activated by GTP. Catalyzes the conversion of uracil and 5-phospho-alpha-D-ribose 1-diphosphate (PRPP) to UMP and diphosphate. This chain is Uracil phosphoribosyltransferase, found in Aquifex aeolicus (strain VF5).